Consider the following 351-residue polypeptide: Transcriptional activator POG1 (351 aa).

The segment covering 1 to 27 (MKQEPHRQSEEKEKPKGPMAVEREHHT) has biased composition (basic and acidic residues). Positions 1–56 (MKQEPHRQSEEKEKPKGPMAVEREHHTSLSSGTTMTASTGDESTNSRPVESSQTEK) are disordered. A compositionally biased stretch (polar residues) spans 28–56 (SLSSGTTMTASTGDESTNSRPVESSQTEK). Residues Ser152 and Ser168 each carry the phosphoserine modification. Disordered stretches follow at residues 237–256 (GPQA…TPVM) and 280–351 (SMGP…PPPT). Polar residues-rich tracts occupy residues 241–256 (QLPT…TPVM) and 287–296 (IYGQQHQPQP). Residue Ser314 is modified to Phosphoserine.

This sequence belongs to the POG1 family. In terms of processing, phosphorylated by CDC28.

It localises to the nucleus. Its function is as follows. Transcriptional activator which promotes cell cycle recovery with CLN2, after pheromone induced G1 arrest, probably inhibiting the ability of STE20 to activate the pheromone response pathway. Binds the promoters of genes that function in cell cycle regulation, cytoskeletal organization, and spindle assembly. May also be involved in stress-resistance. This chain is Transcriptional activator POG1 (POG1), found in Saccharomyces cerevisiae (strain YJM789) (Baker's yeast).